The sequence spans 59 residues: Large ribosomal subunit protein bL32 (59 aa).

It belongs to the bacterial ribosomal protein bL32 family.

The polypeptide is Large ribosomal subunit protein bL32 (Synechococcus sp. (strain JA-2-3B'a(2-13)) (Cyanobacteria bacterium Yellowstone B-Prime)).